The following is a 476-amino-acid chain: Angiotensinogen (476 aa).

An N-terminal signal peptide occupies residues 1–24 (MAPAGMSLRATILCLLAWAGLAAG). Residues N38, N161, N295, and N319 are each glycosylated (N-linked (GlcNAc...) asparagine). C42 and C162 are joined by a disulfide.

The protein belongs to the serpin family. In terms of processing, in response to low blood pressure, the enzyme renin/REN cleaves angiotensinogen to produce angiotensin-1. Angiotensin-1 is a substrate of ACE (angiotensin converting enzyme) that removes a dipeptide to yield the physiologically active peptide angiotensin-2. Angiotensin-1 and angiotensin-2 can be further processed to generate angiotensin-3, angiotensin-4. Angiotensin 1-9 is cleaved from angiotensin-1 by ACE2 and can be further processed by ACE to produce angiotensin 1-7, angiotensin 1-5 and angiotensin 1-4. Angiotensin 1-7 has also been proposed to be cleaved from angiotensin-2 by ACE2 or from angiotensin-1 by MME (neprilysin). The disulfide bond is labile. Angiotensinogen is present in the circulation in a near 40:60 ratio with the oxidized disulfide-bonded form, which preferentially interacts with receptor-bound renin.

It is found in the secreted. Functionally, essential component of the renin-angiotensin system (RAS), a potent regulator of blood pressure, body fluid and electrolyte homeostasis. Its function is as follows. Acts directly on vascular smooth muscle as a potent vasoconstrictor, affects cardiac contractility and heart rate through its action on the sympathetic nervous system, and alters renal sodium and water absorption through its ability to stimulate the zona glomerulosa cells of the adrenal cortex to synthesize and secrete aldosterone. Acts by binding to angiotensin receptors AGTR1 and AGTR2. Also binds the DEAR/FBXW7-AS1 receptor. In terms of biological role, stimulates aldosterone release. Is a ligand for the G-protein coupled receptor MAS1. Has vasodilator and antidiuretic effects. Has an antithrombotic effect that involves MAS1-mediated release of nitric oxide from platelets. In Gorilla gorilla gorilla (Western lowland gorilla), this protein is Angiotensinogen (AGT).